Here is a 427-residue protein sequence, read N- to C-terminus: Trigger factor (427 aa).

The region spanning 163 to 248 (GDTVVIDFEG…VHEVKAKELP (86 aa)) is the PPIase FKBP-type domain.

The protein belongs to the FKBP-type PPIase family. Tig subfamily.

It localises to the cytoplasm. The catalysed reaction is [protein]-peptidylproline (omega=180) = [protein]-peptidylproline (omega=0). Functionally, involved in protein export. Acts as a chaperone by maintaining the newly synthesized protein in an open conformation. Functions as a peptidyl-prolyl cis-trans isomerase. This Enterococcus faecalis (strain ATCC 700802 / V583) protein is Trigger factor.